We begin with the raw amino-acid sequence, 121 residues long: Small ribosomal subunit protein uS13 (121 aa).

The interval 99–121 is disordered; that stretch reads RGQRTRTNSRTRKGPRRKIMKKK. Residues 101 to 121 show a composition bias toward basic residues; sequence QRTRTNSRTRKGPRRKIMKKK.

Belongs to the universal ribosomal protein uS13 family. As to quaternary structure, part of the 30S ribosomal subunit. Forms a loose heterodimer with protein S19. Forms two bridges to the 50S subunit in the 70S ribosome.

Located at the top of the head of the 30S subunit, it contacts several helices of the 16S rRNA. In the 70S ribosome it contacts the 23S rRNA (bridge B1a) and protein L5 of the 50S subunit (bridge B1b), connecting the 2 subunits; these bridges are implicated in subunit movement. Contacts the tRNAs in the A and P-sites. In Thermodesulfovibrio yellowstonii (strain ATCC 51303 / DSM 11347 / YP87), this protein is Small ribosomal subunit protein uS13.